The sequence spans 430 residues: Ribosomal protein uS12 methylthiotransferase RimO (430 aa).

The MTTase N-terminal domain occupies 1-116; that stretch reads MRVGIKVLGC…IANAIENGTD (116 aa). [4Fe-4S] cluster is bound by residues C10, C46, C79, C148, C152, and C155. In terms of domain architecture, Radical SAM core spans 134 to 365; it reads LEERPYAYVK…LLQAEISNSR (232 aa). The TRAM domain occupies 367–430; sequence DRFVGKKLKF…DEYDMWGSVI (64 aa).

It belongs to the methylthiotransferase family. RimO subfamily. The cofactor is [4Fe-4S] cluster.

The protein localises to the cytoplasm. The catalysed reaction is L-aspartate(89)-[ribosomal protein uS12]-hydrogen + (sulfur carrier)-SH + AH2 + 2 S-adenosyl-L-methionine = 3-methylsulfanyl-L-aspartate(89)-[ribosomal protein uS12]-hydrogen + (sulfur carrier)-H + 5'-deoxyadenosine + L-methionine + A + S-adenosyl-L-homocysteine + 2 H(+). Its function is as follows. Catalyzes the methylthiolation of an aspartic acid residue of ribosomal protein uS12. The sequence is that of Ribosomal protein uS12 methylthiotransferase RimO from Thermotoga petrophila (strain ATCC BAA-488 / DSM 13995 / JCM 10881 / RKU-1).